A 256-amino-acid polypeptide reads, in one-letter code: Triosephosphate isomerase (256 aa).

12–14 (NWK) provides a ligand contact to substrate. His99 serves as the catalytic Electrophile. Residue Glu171 is the Proton acceptor of the active site. Residues Gly177, Ser217, and 238-239 (GG) contribute to the substrate site.

The protein belongs to the triosephosphate isomerase family. As to quaternary structure, homodimer.

Its subcellular location is the cytoplasm. It carries out the reaction D-glyceraldehyde 3-phosphate = dihydroxyacetone phosphate. It functions in the pathway carbohydrate biosynthesis; gluconeogenesis. Its pathway is carbohydrate degradation; glycolysis; D-glyceraldehyde 3-phosphate from glycerone phosphate: step 1/1. In terms of biological role, involved in the gluconeogenesis. Catalyzes stereospecifically the conversion of dihydroxyacetone phosphate (DHAP) to D-glyceraldehyde-3-phosphate (G3P). This Rubrobacter xylanophilus (strain DSM 9941 / JCM 11954 / NBRC 16129 / PRD-1) protein is Triosephosphate isomerase.